Reading from the N-terminus, the 505-residue chain is Olfactomedin-4 (505 aa).

The signal sequence occupies residues 1–18 (MSYSLLFLLALQFCLGSA). N-linked (GlcNAc...) asparagine glycosylation is found at N64 and N128. Positions 174–225 (HIIDMLEVEIRNMTLLVEKLESLDQNNVLSIRRQILALKTKLKECEASKSDL) form a coiled coil. The region spanning 237–499 (SCSHGGVVNI…LLNYDLVFLQ (263 aa)) is the Olfactomedin-like domain. A disulfide bridge connects residues C238 and C429.

Homomultimer; disulfide-linked. Interacts with NDUFA13. Interacts with cell surface lectins (locutions ricinus communis agglutinin I, concanavalin A and wheat germ agglutinin) and cadherin. Post-translationally, N-glycosylated.

It is found in the secreted. The protein resides in the extracellular space. Its subcellular location is the mitochondrion. Functionally, may promote proliferation of pancreatic cancer cells by favoring the transition from the S to G2/M phase. In myeloid leukemic cell lines, inhibits cell growth and induces cell differentiation and apoptosis. May play a role in the inhibition of EIF4EBP1 phosphorylation/deactivation. Facilitates cell adhesion, most probably through interaction with cell surface lectins and cadherin. In Mus musculus (Mouse), this protein is Olfactomedin-4 (Olfm4).